A 295-amino-acid polypeptide reads, in one-letter code: Craniofacial development protein 1 (295 aa).

Composition is skewed to acidic residues over residues 1–18 (MEEFDSEDFSTSDEDEDY) and 25–43 (YSEDDVNELVKEDEVDGEE). Disordered regions lie at residues 1–153 (MEEF…LDKP) and 188–217 (FLKQTEREKPQALVTSPATPLPAGSGIKRA). Residues 49–65 (KGKRRKAQGIPARKRKQ) show a composition bias toward basic residues. 4 positions are modified to phosphoserine: Ser-80, Ser-83, Ser-84, and Ser-112. Residue Lys-146 forms a Glycyl lysine isopeptide (Lys-Gly) (interchain with G-Cter in SUMO2) linkage. The tract at residues 174 to 213 (VTKEVDAASKEAKSFLKQTEREKPQALVTSPATPLPAGSG) is hydrophilic. Residues 188-197 (FLKQTEREKP) are compositionally biased toward basic and acidic residues. Ser-212 bears the Phosphoserine mark. Residues 214–295 (IKRASGMSSL…RDLRLSKMKP (82 aa)) enclose the BCNT-C domain. Lys-215 is modified (N6-methyllysine). Ser-246 carries the post-translational modification Phosphoserine.

Expressed in lung, liver and heart, with higher expression in teeth.

Its subcellular location is the chromosome. The protein resides in the centromere. It is found in the kinetochore. May play a role during embryogenesis. May modulate tooth organogenesis since alterations of this protein function affect tooth organs size as well as individual cell fate and survival. In embryonic cells, blockage of the function results in increased number of apoptotic cells, reduced proliferation, alterations in cell shape and fibronection matrix synthesis. The polypeptide is Craniofacial development protein 1 (Cfdp1) (Mus musculus (Mouse)).